The chain runs to 457 residues: Phosphoglucosamine mutase (457 aa).

Ser103 (phosphoserine intermediate) is an active-site residue. The Mg(2+) site is built by Ser103, Asp244, Asp246, and Asp248. Ser103 is modified (phosphoserine).

It belongs to the phosphohexose mutase family. Mg(2+) is required as a cofactor. In terms of processing, activated by phosphorylation.

The enzyme catalyses alpha-D-glucosamine 1-phosphate = D-glucosamine 6-phosphate. Functionally, catalyzes the conversion of glucosamine-6-phosphate to glucosamine-1-phosphate. The protein is Phosphoglucosamine mutase of Granulibacter bethesdensis (strain ATCC BAA-1260 / CGDNIH1).